We begin with the raw amino-acid sequence, 446 residues long: MGKKDGKRQLMSDDDSFDTISILSGSMDQLSVGSMEDSGILKGSKTWLEELESTIDDLIEVKKIGAKEREEHLEKIYVICTRHYAKRISENVASLEELLLKIFNGPRSDKELILTIRIMCTFCLASVFQVEELWTKTEGRFNALANDAESSGIKCESILCFSLLTALLDSEADVIEFGDFLISILESDGAVVNSEDDEGVVGCACQALGLLLTCVTTESEFLASAAEALSEQLDAASIDVQLAAGQALAALFERVNEIRPDKDEENDESDVSQTSKFDDIIPDRNQLLITLRDLASESSKSIGKKQRKVLHQVFRNVLQTIEEPNARNILRNSVRIGQSTVQLDSWKKILRAQMLRYVLGSSFSEYFAKSTFIRYFLGYSGYVAGLSSRDPDSDFDSDNVDEYIDDHKRGLSSTERRDLDRVRDKQKKQDQRVRADYINSVYFSQN.

2 positions are modified to phosphoserine: Ser-393 and Ser-397. A disordered region spans residues 411-431 (LSSTERRDLDRVRDKQKKQDQ).

This sequence belongs to the IFRD family.

It is found in the cytoplasm. This is an uncharacterized protein from Schizosaccharomyces pombe (strain 972 / ATCC 24843) (Fission yeast).